The chain runs to 184 residues: Large ribosomal subunit protein uL22 (184 aa).

The segment at 160–184 is disordered; sequence PEEEVAQKKKISQKKLKKQKLMARE. Residues 167 to 184 are compositionally biased toward basic residues; it reads KKKISQKKLKKQKLMARE.

The protein belongs to the universal ribosomal protein uL22 family. As to quaternary structure, component of the large ribosomal subunit. In terms of tissue distribution, expressed in pancreas, lung, colon, cystic duct, gall bladder, kidney and liver. Expressed at high levels in the well differentiated pancreatic tumor cell lines HPAF, COLO 357 and Capan-1, the moderately differentiated pancreatic tumor cell lines T3M-4, AsPc-1 and BxPc-3, the poorly differentiated pancreatic tumor cell line MIA PaCa-2, and the pancreatic tumor cell lines of undefined differentiation status such as SW979. Expressed at lower levels in the poorly differentiated pancreatic tumor cell lines HCG-25 and PANC-1.

The protein resides in the cytoplasm. In terms of biological role, component of the large ribosomal subunit. The ribosome is a large ribonucleoprotein complex responsible for the synthesis of proteins in the cell. This is Large ribosomal subunit protein uL22 (RPL17) from Homo sapiens (Human).